Here is a 179-residue protein sequence, read N- to C-terminus: Enhancer of split m8 protein (179 aa).

The bHLH domain occupies 10–65; sequence YQKVKKPMLERQRRARMNKCLDNLKTLVAELRGDDGILRMDKAEMLESAVIFMRQQ. One can recognise an Orange domain in the interval 83-116; it reads FKNGYMNAVNEVSRVMASTPGMSVDLGKSVMTHL. Positions 146 to 179 are disordered; the sequence is DKAPLSPASSGYHSDCDSPAPSPQPMQQPLWRPW. Positions 176-179 match the WRPW motif motif; the sequence is WRPW.

As to quaternary structure, homodimer. Heterodimers with dpn. Transcription repression requires formation of a complex with a corepressor protein (Groucho).

It is found in the nucleus. Functionally, participates in the control of cell fate choice by uncommitted neuroectodermal cells in the embryo. Transcriptional repressor. Binds DNA on N-box motifs: 5'-CACNAG-3'. Part of the Notch signaling pathway. The sequence is that of Enhancer of split m8 protein from Drosophila melanogaster (Fruit fly).